Here is a 411-residue protein sequence, read N- to C-terminus: Probable glutamate dehydrogenase 3 (411 aa).

Lysine 102 is a catalytic residue.

This sequence belongs to the Glu/Leu/Phe/Val dehydrogenases family.

The enzyme catalyses L-glutamate + NAD(+) + H2O = 2-oxoglutarate + NH4(+) + NADH + H(+). It carries out the reaction L-glutamate + NADP(+) + H2O = 2-oxoglutarate + NH4(+) + NADPH + H(+). The chain is Probable glutamate dehydrogenase 3 (GSH3) from Arabidopsis thaliana (Mouse-ear cress).